A 183-amino-acid polypeptide reads, in one-letter code: Protein Syd (183 aa).

This sequence belongs to the Syd family.

The protein localises to the cell inner membrane. In terms of biological role, interacts with the SecY protein in vivo. May bind preferentially to an uncomplexed state of SecY, thus functioning either as a chelating agent for excess SecY in the cell or as a regulatory factor that negatively controls the translocase function. The protein is Protein Syd of Yersinia enterocolitica serotype O:8 / biotype 1B (strain NCTC 13174 / 8081).